Consider the following 273-residue polypeptide: Urease accessory protein UreD (273 aa).

Belongs to the UreD family. In terms of assembly, ureD, UreF and UreG form a complex that acts as a GTP-hydrolysis-dependent molecular chaperone, activating the urease apoprotein by helping to assemble the nickel containing metallocenter of UreC. The UreE protein probably delivers the nickel.

It localises to the cytoplasm. Functionally, required for maturation of urease via the functional incorporation of the urease nickel metallocenter. The polypeptide is Urease accessory protein UreD (Bacillus cereus (strain ATCC 10987 / NRS 248)).